The primary structure comprises 295 residues: MITELHGIDIRENEPLKHYTYTKVGGPADFLAFPRNHYELSRIVVYANKENMPWLVLGNASNLIVRDGGIRGFVIMFDKLNAVHLNGYTLEAEAGANLIETTKIAKFHSLTGFEFACGIPGSIGGAVFMNAGAYGGEISHIFLSAKVLTSSGEIKTISARDMAFGYRHSAIQETGDIVISAKFALKPGNYDTISQEMNRLNHLRQLKQPLEFPSCGSVFKRPPGHFAGQLIMEANLKGHRIGGVEVSEKHAGFMINVADGTAKDYEDLIAYVIETVENHSGVRLEPEVRIIGENL.

The 166-residue stretch at 23–188 (KVGGPADFLA…ISAKFALKPG (166 aa)) folds into the FAD-binding PCMH-type domain. Arg-167 is an active-site residue. Residue Ser-217 is the Proton donor of the active site. Glu-287 is a catalytic residue.

Belongs to the MurB family. The cofactor is FAD.

The protein localises to the cytoplasm. The enzyme catalyses UDP-N-acetyl-alpha-D-muramate + NADP(+) = UDP-N-acetyl-3-O-(1-carboxyvinyl)-alpha-D-glucosamine + NADPH + H(+). It participates in cell wall biogenesis; peptidoglycan biosynthesis. Cell wall formation. This Streptococcus pyogenes serotype M3 (strain ATCC BAA-595 / MGAS315) protein is UDP-N-acetylenolpyruvoylglucosamine reductase.